A 220-amino-acid polypeptide reads, in one-letter code: Aklanonic acid methyltransferase DauC (220 aa).

The protein belongs to the methyltransferase superfamily. DnrC family. In terms of assembly, homodimer.

The catalysed reaction is aklanonate + S-adenosyl-L-methionine = methyl aklanonate + S-adenosyl-L-homocysteine. It participates in antibiotic biosynthesis; daunorubicin biosynthesis. Its pathway is antibiotic biosynthesis; carminomycin biosynthesis. It functions in the pathway antibiotic biosynthesis; rhodomycin biosynthesis. The protein operates within antibiotic biosynthesis; aclacinomycin biosynthesis. Involved in the biosynthesis of aklavinone which is an important precursor common to the formation of the clinically significant anthracyclines such as carminomycin, daunorubicin (daunomycin), rhodomycin, aclacinomycin T (aklavin) and aclacinomycin A (aclarubicin). These compounds are aromatic polyketide antibiotics that exhibit high cytotoxicity and are widely applied in the chemotherapy of a variety of cancers. Catalyzes the methyl esterification of aklanonic acid to yield aklanonic acid methyl ester. This Streptomyces sp. (strain C5) protein is Aklanonic acid methyltransferase DauC (dauC).